Consider the following 33-residue polypeptide: Photosystem II reaction center protein T (33 aa).

Residues A3–F23 form a helical membrane-spanning segment.

This sequence belongs to the PsbT family. As to quaternary structure, PSII is composed of 1 copy each of membrane proteins PsbA, PsbB, PsbC, PsbD, PsbE, PsbF, PsbH, PsbI, PsbJ, PsbK, PsbL, PsbM, PsbT, PsbY, PsbZ, Psb30/Ycf12, at least 3 peripheral proteins of the oxygen-evolving complex and a large number of cofactors. It forms dimeric complexes.

The protein resides in the plastid. It localises to the chloroplast thylakoid membrane. Found at the monomer-monomer interface of the photosystem II (PS II) dimer, plays a role in assembly and dimerization of PSII. PSII is a light-driven water plastoquinone oxidoreductase, using light energy to abstract electrons from H(2)O, generating a proton gradient subsequently used for ATP formation. The polypeptide is Photosystem II reaction center protein T (Pelargonium hortorum (Common geranium)).